The following is a 65-amino-acid chain: Metallothionein-like protein type 3 (65 aa).

The protein belongs to the metallothionein superfamily. Type 15 family.

Its function is as follows. Metallothioneins have a high content of cysteine residues that bind various heavy metals. The protein is Metallothionein-like protein type 3 of Carica papaya (Papaya).